The following is a 52-amino-acid chain: DNA import protein CedA2 (52 aa).

Helical transmembrane passes span 1-21 (MKSYLLVSMLLLLNSILVYIY) and 27-47 (ILVSGITVAVIIYIVVKIIFE).

As to quaternary structure, forms a complex composed of CedA, CedA1 and CedA2.

It is found in the cell membrane. In terms of biological role, part of the Ced system, which is involved in DNA import. This is DNA import protein CedA2 from Sulfolobus acidocaldarius (strain ATCC 33909 / DSM 639 / JCM 8929 / NBRC 15157 / NCIMB 11770).